The sequence spans 270 residues: Sorting nexin-11 (270 aa).

The 117-residue stretch at 16–132 folds into the PX domain; sequence VITVRVQDPR…HLFLQSQLSV (117 aa). 3 residues coordinate a 1,2-diacyl-sn-glycero-3-phospho-(1D-myo-inositol-3-phosphate): arginine 59, lysine 85, and arginine 99. An important for membrane trafficking region spans residues 135 to 139; that stretch reads IEACV. The span at 168 to 177 shows a compositional bias: basic and acidic residues; that stretch reads SSSHLAKGDQ. The segment at 168-203 is disordered; the sequence is SSSHLAKGDQPKSCCFLPRSGRRSSPSPPPSEEKDH.

Belongs to the sorting nexin family. As to quaternary structure, monomer. Interacts with TRPV3; this interaction promotes TRPV3 trafficking from the cell membrane to lysosome for degradation.

It is found in the cell membrane. It localises to the endosome. The protein resides in the cytoplasm. Its function is as follows. Phosphoinositide-binding protein involved in protein sorting and membrane trafficking in endosomes. Regulates the levels of TRPV3 by promoting its trafficking from the cell membrane to lysosome for degradation. This chain is Sorting nexin-11 (SNX11), found in Homo sapiens (Human).